We begin with the raw amino-acid sequence, 406 residues long: Argininosuccinate synthase (406 aa).

ATP-binding positions include 11–19 and alanine 38; that span reads AYSGGLDTS. The L-citrulline site is built by tyrosine 91 and serine 96. Glycine 121 provides a ligand contact to ATP. Residues threonine 123, asparagine 127, and aspartate 128 each coordinate L-aspartate. Asparagine 127 contributes to the L-citrulline binding site. L-citrulline contacts are provided by arginine 131, serine 181, serine 190, glutamate 266, and tyrosine 278.

It belongs to the argininosuccinate synthase family. Type 1 subfamily. As to quaternary structure, homotetramer.

The protein resides in the cytoplasm. The catalysed reaction is L-citrulline + L-aspartate + ATP = 2-(N(omega)-L-arginino)succinate + AMP + diphosphate + H(+). It functions in the pathway amino-acid biosynthesis; L-arginine biosynthesis; L-arginine from L-ornithine and carbamoyl phosphate: step 2/3. In Campylobacter lari (strain RM2100 / D67 / ATCC BAA-1060), this protein is Argininosuccinate synthase.